The chain runs to 344 residues: Small neutral protease regulatory protein (344 aa).

An HTH lysR-type domain is found at 1 to 60 (MELEVRHLRALCAIADAGSLHRAARRLGVAQPTLSTQLTRIEQALGGPLFTRERTGCRPT). Residues 20–39 (LHRAARRLGVAQPTLSTQLT) constitute a DNA-binding region (H-T-H motif). A disordered region spans residues 322 to 344 (SCGRAEGSRSRRPRDVAPPRPIG). Residues 327-338 (EGSRSRRPRDVA) show a composition bias toward basic and acidic residues.

The protein belongs to the LysR transcriptional regulatory family.

Functionally, transcriptional activator of the gene (snpA) for the small neutral protease. In Streptomyces lividans, this protein is Small neutral protease regulatory protein (mprR).